We begin with the raw amino-acid sequence, 261 residues long: 1-(5-phosphoribosyl)-5-[(5-phosphoribosylamino)methylideneamino] imidazole-4-carboxamide isomerase (261 aa).

Belongs to the HisA/HisF family.

It is found in the cytoplasm. It carries out the reaction 1-(5-phospho-beta-D-ribosyl)-5-[(5-phospho-beta-D-ribosylamino)methylideneamino]imidazole-4-carboxamide = 5-[(5-phospho-1-deoxy-D-ribulos-1-ylimino)methylamino]-1-(5-phospho-beta-D-ribosyl)imidazole-4-carboxamide. The protein operates within amino-acid biosynthesis; L-histidine biosynthesis; L-histidine from 5-phospho-alpha-D-ribose 1-diphosphate: step 4/9. Its function is as follows. Catalyzes the isomerization of the aminoaldose moiety of ProFAR to the aminoketose of PRFAR. The chain is 1-(5-phosphoribosyl)-5-[(5-phosphoribosylamino)methylideneamino] imidazole-4-carboxamide isomerase from Saccharomyces cerevisiae (strain ATCC 204508 / S288c) (Baker's yeast).